The chain runs to 287 residues: Ribosomal RNA small subunit methyltransferase A (287 aa).

Residues asparagine 28, leucine 30, glycine 55, glutamate 76, aspartate 101, and asparagine 125 each contribute to the S-adenosyl-L-methionine site.

This sequence belongs to the class I-like SAM-binding methyltransferase superfamily. rRNA adenine N(6)-methyltransferase family. RsmA subfamily.

The protein localises to the cytoplasm. It catalyses the reaction adenosine(1518)/adenosine(1519) in 16S rRNA + 4 S-adenosyl-L-methionine = N(6)-dimethyladenosine(1518)/N(6)-dimethyladenosine(1519) in 16S rRNA + 4 S-adenosyl-L-homocysteine + 4 H(+). Specifically dimethylates two adjacent adenosines (A1518 and A1519) in the loop of a conserved hairpin near the 3'-end of 16S rRNA in the 30S particle. May play a critical role in biogenesis of 30S subunits. The sequence is that of Ribosomal RNA small subunit methyltransferase A from Alkaliphilus oremlandii (strain OhILAs) (Clostridium oremlandii (strain OhILAs)).